The primary structure comprises 3122 residues: Abnormal spindle-like microcephaly-associated protein homolog (3122 aa).

2 disordered regions span residues 1 to 26 and 139 to 169; these read MATM…AGDP and KRSL…NESF. Residues 10 to 21 are compositionally biased toward basic and acidic residues; sequence PEERGRRARPDP. The segment at 289–388 is sufficient for interaction with KATNA1:KATNB1; that stretch reads STQTQIHFLS…KDSMGHVGQQ (100 aa). 3 positions are modified to phosphoserine: serine 348, serine 373, and serine 573. The tract at residues 579–600 is disordered; that stretch reads PSTVARTTKKEGHTSKRISSLE. The region spanning 888–1024 is the Calponin-homology (CH) 1 domain; it reads KASKELLLAF…LLWKIALAFQ (137 aa). Residues 1025–1045 are a coiled coil; that stretch reads VDISLNLDQLKEEIDFLKHTH. The residue at position 1071 (serine 1071) is a Phosphoserine. One can recognise a Calponin-homology (CH) 2 domain in the interval 1078-1229; the sequence is GDSVQLLMDW…YLSFLCARLL (152 aa). 32 IQ domains span residues 1234–1263, 1315–1346, 1410–1439, 1504–1535, 1550–1579, 1600–1629, 1623–1652, 1696–1725, 1719–1750, 1769–1798, 1792–1821, 1842–1871, 1865–1896, 1915–1946, 1938–1967, 1988–2017, 2011–2042, 2061–2092, 2134–2165, 2157–2188, 2207–2238, 2230–2261, 2279–2310, 2302–2333, 2343–2374, 2366–2397, 2416–2447, 2491–2522, 2602–2633, 2674–2705, 2724–2755, and 2849–2880; these read EIRA…RDKA, QNKS…VILQ, QTKA…VVIQ, KRAA…CVLQ, LKKM…AAIT, TRSS…SVIK, ALAS…ATIK, VRES…AAIS, QCKA…LVIQ, VKRA…AAVT, QSTA…SAVK, TREA…AAVK, QHEA…AVIQ, LRHA…ALIQ, QHQC…AALQ, TKAA…AAVT, CHKA…IVIQ, LRRA…TLIE, TLKA…TLIQ, MHFA…TMVQ, LRRS…TLIQ, MHLA…IWIQ, LEKA…TVIQ, MHRA…VVIQ, QKHA…TLIQ, MHSS…IFVQ, LRKA…ALIQ, QHSA…KVIQ, KVEA…NIIE, RHRA…LIIQ, LKKS…RLFH, and ITSC…IRRS.

Interacts with KATNA1 and KATNB1; katanin complex formation KATNA1:KATNB1 is required for the association. As to expression, expressed in fetal brain, peripheral nervous system, liver and spleen. In the adult, expressed exclusively in testis, ovary and spleen.

The protein resides in the cytoplasm. Its subcellular location is the cytoskeleton. It is found in the spindle. The protein localises to the nucleus. Its function is as follows. Involved in mitotic spindle regulation and coordination of mitotic processes. The function in regulating microtubule dynamics at spindle poles including spindle orientation, astral microtubule density and poleward microtubule flux seem to depend on its association with the katanin complex formed by KATNA1 and KATNB1. Enhances the microtubule lattice severing activity of KATNA1 by recruiting the katanin complex to microtubules. Can block microtubule minus-end growth and reversely this function can be enhanced by the katanin complex. May have a preferential role in regulating neurogenesis. The sequence is that of Abnormal spindle-like microcephaly-associated protein homolog (Aspm) from Mus musculus (Mouse).